The following is a 610-amino-acid chain: L-galactono-1,4-lactone dehydrogenase, mitochondrial (610 aa).

The N-terminal 35 residues, 1–35 (MLRSLLLRRSVGHSLGTLSPSSSTIRSSFSPHRTL), are a transit peptide targeting the mitochondrion. The disordered stretch occupies residues 17-61 (TLSPSSSTIRSSFSPHRTLCTTGQTLTPPPPPPPRPPPPPPATAS). A compositionally biased stretch (low complexity) spans 19-30 (SPSSSTIRSSFS). Residues 36–101 (CTTGQTLTPP…AKHKKAQIFR (66 aa)) constitute a propeptide, removed in mature form. Over residues 43–58 (TPPPPPPPRPPPPPPA) the composition is skewed to pro residues. The helical transmembrane segment at 68–84 (YAGYAALAIFSGVATYF) threads the bilayer. Residues 123–258 (TRNFNQPENL…TPAKGTIELS (136 aa)) enclose the FAD-binding PCMH-type domain.

It depends on FAD as a cofactor.

It is found in the mitochondrion membrane. It catalyses the reaction L-galactono-1,4-lactone + 4 Fe(III)-[cytochrome c] = L-dehydroascorbate + 4 Fe(II)-[cytochrome c] + 5 H(+). The catalysed reaction is L-gulono-1,4-lactone + 2 Fe(III)-[cytochrome c] = L-ascorbate + 2 Fe(II)-[cytochrome c] + 3 H(+). The protein operates within cofactor biosynthesis; L-ascorbate biosynthesis. Involved in the biosynthesis of ascorbate. Catalyzes the final step of ascorbate biosynthesis. Uses L-galactono-1,4-lactone and L-gulono-1,4-lactone as substrates, but not D-galactono-1,4-lactone, D-gulono-1,4-lactone, L-mannono-1,4-lactone or D-galactonic acid. Also active with phenazine methosulfate and 1,4-benzoquinone as electron acceptors. Involved in the regulation of the accumulation of the mitochondrial respiratory complex I. Structural part of one of the plant-specific mitochondrial complex I assembly intermediates, lacking the whole distal (PD) module. Prevents the binding of the plant specific P1 protein (CPN60/HSP60), responsible for the linkage of the proximal (PP) to the distal (PD) module. The chain is L-galactono-1,4-lactone dehydrogenase, mitochondrial from Arabidopsis thaliana (Mouse-ear cress).